The chain runs to 132 residues: Small ribosomal subunit protein uS11 (132 aa).

The segment at 110–132 (IEDVTPVPSDSTRRKGGRRGRRL) is disordered. Over residues 123-132 (RKGGRRGRRL) the composition is skewed to basic residues.

This sequence belongs to the universal ribosomal protein uS11 family. Component of the small ribosomal subunit. Mature ribosomes consist of a small (40S) and a large (60S) subunit. The 40S subunit contains about 32 different proteins and 1 molecule of RNA (18S). The 60S subunit contains 45 different proteins and 3 molecules of RNA (25S, 5.8S and 5S).

The protein localises to the cytoplasm. Functionally, component of the ribosome, a large ribonucleoprotein complex responsible for the synthesis of proteins in the cell. The small ribosomal subunit (SSU) binds messenger RNAs (mRNAs) and translates the encoded message by selecting cognate aminoacyl-transfer RNA (tRNA) molecules. The large subunit (LSU) contains the ribosomal catalytic site termed the peptidyl transferase center (PTC), which catalyzes the formation of peptide bonds, thereby polymerizing the amino acids delivered by tRNAs into a polypeptide chain. The nascent polypeptides leave the ribosome through a tunnel in the LSU and interact with protein factors that function in enzymatic processing, targeting, and the membrane insertion of nascent chains at the exit of the ribosomal tunnel. RPS14B is involved in nucleolar processing of pre-18S ribosomal RNA and ribosome assembly. The protein is Small ribosomal subunit protein uS11 (RPS14B) of Candida albicans (strain SC5314 / ATCC MYA-2876) (Yeast).